A 330-amino-acid chain; its full sequence is ADP-L-glycero-D-manno-heptose-6-epimerase (330 aa).

NADP(+) is bound by residues 11 to 12, 32 to 33, lysine 39, lysine 54, 75 to 79, and asparagine 92; these read FI, DN, and EGACS. Tyrosine 139 (proton acceptor) is an active-site residue. Residue lysine 143 coordinates NADP(+). Asparagine 168 is a substrate binding site. NADP(+)-binding residues include valine 169 and lysine 177. The active-site Proton acceptor is lysine 177. Substrate-binding positions include arginine 179, histidine 186, 200-203, arginine 213, and tyrosine 292; that span reads FGEY.

Belongs to the NAD(P)-dependent epimerase/dehydratase family. HldD subfamily. Homopentamer. NADP(+) serves as cofactor.

The enzyme catalyses ADP-D-glycero-beta-D-manno-heptose = ADP-L-glycero-beta-D-manno-heptose. It functions in the pathway nucleotide-sugar biosynthesis; ADP-L-glycero-beta-D-manno-heptose biosynthesis; ADP-L-glycero-beta-D-manno-heptose from D-glycero-beta-D-manno-heptose 7-phosphate: step 4/4. In terms of biological role, catalyzes the interconversion between ADP-D-glycero-beta-D-manno-heptose and ADP-L-glycero-beta-D-manno-heptose via an epimerization at carbon 6 of the heptose. This Burkholderia cenocepacia (strain ATCC BAA-245 / DSM 16553 / LMG 16656 / NCTC 13227 / J2315 / CF5610) (Burkholderia cepacia (strain J2315)) protein is ADP-L-glycero-D-manno-heptose-6-epimerase.